The following is a 165-amino-acid chain: Yapsin-5 (165 aa).

Residues 1–24 (MQLFSILSLLSSLMCSLTVLGSSA) form the signal peptide. The N-linked (GlcNAc...) asparagine glycan is linked to asparagine 57. The 99-residue stretch at 67–165 (YVVKMEIGTP…TRLSSMTYTY (99 aa)) folds into the Peptidase A1 domain.

It belongs to the peptidase A1 family.

This chain is Yapsin-5 (YPS5), found in Saccharomyces cerevisiae (strain ATCC 204508 / S288c) (Baker's yeast).